The chain runs to 155 residues: 3-hydroxyacyl-[acyl-carrier-protein] dehydratase FabZ (155 aa).

The active site involves His57.

The protein belongs to the thioester dehydratase family. FabZ subfamily.

The protein localises to the cytoplasm. The enzyme catalyses a (3R)-hydroxyacyl-[ACP] = a (2E)-enoyl-[ACP] + H2O. Involved in unsaturated fatty acids biosynthesis. Catalyzes the dehydration of short chain beta-hydroxyacyl-ACPs and long chain saturated and unsaturated beta-hydroxyacyl-ACPs. The polypeptide is 3-hydroxyacyl-[acyl-carrier-protein] dehydratase FabZ (Sorangium cellulosum (strain So ce56) (Polyangium cellulosum (strain So ce56))).